The chain runs to 424 residues: Tyrosine--tRNA ligase (424 aa).

Residue Y37 participates in L-tyrosine binding. The 'HIGH' region motif lies at 42–51; the sequence is PTADSLHLGH. Residues Y175 and Q179 each coordinate L-tyrosine. The short motif at 235–239 is the 'KMSKS' region element; sequence KFGKT. K238 lines the ATP pocket. In terms of domain architecture, S4 RNA-binding spans 357 to 414; the sequence is ADLQQALVAAELVPSRGQARTLISSNAVSVNGEKQASIDYVFDDADRLYSRYTLLRRG.

Belongs to the class-I aminoacyl-tRNA synthetase family. TyrS type 1 subfamily. Homodimer.

It localises to the cytoplasm. The catalysed reaction is tRNA(Tyr) + L-tyrosine + ATP = L-tyrosyl-tRNA(Tyr) + AMP + diphosphate + H(+). Functionally, catalyzes the attachment of tyrosine to tRNA(Tyr) in a two-step reaction: tyrosine is first activated by ATP to form Tyr-AMP and then transferred to the acceptor end of tRNA(Tyr). The protein is Tyrosine--tRNA ligase of Sodalis glossinidius (strain morsitans).